We begin with the raw amino-acid sequence, 296 residues long: mRNA 3'-end-processing protein RNA15 (296 aa).

Residues 18 to 96 (RVVYLGSIPY…RFLKCGYSSN (79 aa)) enclose the RRM domain. A disordered region spans residues 99–140 (ISGVSQQQQQQYNNINGNNNNNGNNNNNSNGPDFQNSGNANF). Low complexity predominate over residues 100–135 (SGVSQQQQQQYNNINGNNNNNGNNNNNSNGPDFQNS).

In terms of assembly, component of the CFIA complex, which is composed of RNA14, RNA15, PCF11 and CLP1. Interacts directly with RNA14. Interacts with polyadenylate-binding protein PAB1.

It localises to the nucleus. In terms of biological role, RNA-binding component of the cleavage factor IA (CFIA) complex, which is involved in the endonucleolytic cleavage during polyadenylation-dependent pre-mRNA 3'-end formation and cooperates with the cleavage factor NAB4/CFIB and the cleavage and polyadenylation factor (CPF) complex. Binds to A-rich RNA sequence elements. The protein is mRNA 3'-end-processing protein RNA15 (RNA15) of Saccharomyces cerevisiae (strain ATCC 204508 / S288c) (Baker's yeast).